A 138-amino-acid polypeptide reads, in one-letter code: 1,4-dihydroxy-2-naphthoyl-CoA hydrolase (138 aa).

Asp15 is a catalytic residue.

This sequence belongs to the 4-hydroxybenzoyl-CoA thioesterase family. DHNA-CoA hydrolase subfamily.

It catalyses the reaction 1,4-dihydroxy-2-naphthoyl-CoA + H2O = 1,4-dihydroxy-2-naphthoate + CoA + H(+). The protein operates within cofactor biosynthesis; phylloquinone biosynthesis. It participates in quinol/quinone metabolism; 1,4-dihydroxy-2-naphthoate biosynthesis; 1,4-dihydroxy-2-naphthoate from chorismate: step 7/7. In terms of biological role, catalyzes the hydrolysis of 1,4-dihydroxy-2-naphthoyl-CoA (DHNA-CoA) to 1,4-dihydroxy-2-naphthoate (DHNA), a reaction involved in phylloquinone (vitamin K1) biosynthesis. This is 1,4-dihydroxy-2-naphthoyl-CoA hydrolase from Trichodesmium erythraeum (strain IMS101).